The chain runs to 446 residues: Alkylglycerol monooxygenase (446 aa).

A run of 2 helical transmembrane segments spans residues 43–63 (ATVYFFIMLILEMIISWAWKG) and 110–130 (WDSPWTWWLTFLGVDFGYYWF). The Fatty acid hydroxylase domain maps to 118–248 (LTFLGVDFGY…LIIWDRMFGT (131 aa)). Positions 131 to 135 (HRMAH) match the Histidine box-1 motif. A Histidine box-2 motif is present at residues 144 to 148 (HQTHH). Residues 167-187 (YFSWMFYWPMAFCIPPSVFAV) traverse the membrane as a helical segment. The short motif at 220 to 224 (HRVHH) is the Histidine box-3 element. 3 helical membrane passes run 339-359 (MMHFLLLLAVYVHMFEAKLIL), 362-382 (ATLLLRIGYILLTLTSLGFIF), and 412-434 (VPYLRIINEVTFSICTAAWGLKA).

It belongs to the sterol desaturase family. TMEM195 subfamily. The cofactor is Fe cation.

Its subcellular location is the endoplasmic reticulum membrane. The enzyme catalyses 1-O-(1,2-saturated-alkyl)-sn-glycerol + (6R)-L-erythro-5,6,7,8-tetrahydrobiopterin + O2 = a 1-(1-hydroxyalkyl)-sn-glycerol + (6R)-L-erythro-6,7-dihydrobiopterin + H2O. Its function is as follows. Glyceryl-ether monooxygenase that cleaves the O-alkyl bond of ether lipids. Ether lipids are essential components of brain membranes. The polypeptide is Alkylglycerol monooxygenase (agmo) (Xenopus tropicalis (Western clawed frog)).